Reading from the N-terminus, the 286-residue chain is MIHQQHMRNIAQWLQENGITRATVAPDWMSIPCGFMACDAQRVICRIDECRGWSAGLALAPVMFRAQLNEQDLPLSLTVVGIAPEKLSAWAGADAERLTVTALPAITTYGEPEGNLLTGPWQPRVSYRKQWARWRVMILPILLILVALAVERGVTLWSVSEQVAQSRTQAEEQFLTLFPEQKRIVNLRSQVTMALKKYRPQADDTRLLAELSAIASTLKSASLSDIEMRGFTFDQKRQILHLQLRAANFASFDKLRSVLATDYVVQQDALQKEGDAVSGGVTLRRK.

Residues 136-156 (VMILPILLILVALAVERGVTL) form a helical membrane-spanning segment.

Belongs to the GSP L family.

It is found in the cell inner membrane. Functionally, involved in a type II secretion system (T2SS, formerly general secretion pathway, GSP) for the export of folded proteins across the outer membrane. The protein is Putative type II secretion system L-type protein YghE of Escherichia coli (strain K12).